The primary structure comprises 542 residues: MVWGLFPVDPLSGEDKYYIFSKGIYKVGRKGCDIIINKDKGVSRIHAELTFDATTVSTSRRNKSSSDTSSFVIRVKDCSKYGTFVKTDLGTKDKVHELSNKEKILQDGDVIAFGTGSAIYRLSLIPLVFYLCPSSETFKVDQPVQDAVSSIGARISPTLSEECTHVLLEPRMQVNEALINAILAKKTIILTNWVMLLAEKSICSEIPGYSQYRPSVMVEEALVDVLELNVREKCLEGFTFVLEPTDTYRFGCSFPSLLEVCGAETVTIEDISSMSQDSQFGEINRMICVIPKSAGDKFGRFKHLSLLSRVNEMDLVCAVFSGNLPSTSLIPPSVVISSSCSTDETVVADSEAEEEETTSSVHMIDATEKAETPEKPAAIVIEDSPVTILEETSNLNEFKSVNLLADTESRGHMDEKNSSDSVTIRRDRNDEAETGKSEIIYTQDLIVRDLRSTRKVQSTGGEGVVDFKRFRKGNVTCGNSFSSLIPFAKDPYKEYDSWDVTDFMKEEKKRKQMEAIAEDLFKTEKARKRGTAGSIRGFLSGS.

In terms of domain architecture, FHA spans Tyr-25–Gly-90. A BRCT domain is found at Ile-119–Met-195. The disordered stretch occupies residues Ser-409–Asp-430. The segment at Val-465 to Val-500 is involved in MRE11-binding.

It belongs to the Nibrin family. Component of the MRN complex composed of two heterodimers RAD50 and MRE11 associated with a single NBS1.

The protein localises to the nucleus. The protein resides in the chromosome. In terms of biological role, component of the MRN complex, which plays a central role in double-strand break (DSB) repair, DNA recombination, maintenance of telomere integrity and meiosis. The MRN complex is involved in the repair of DNA double-strand breaks (DSBs) via homologous recombination (HR), an error-free mechanism which primarily occurs during S and G2 phases. The complex (1) mediates the end resection of damaged DNA, which generates proper single-stranded DNA, a key initial steps in HR, and is (2) required for the recruitment of other repair factors and efficient activation of ATM and ATR upon DNA damage. The MRN complex possesses single-strand endonuclease activity and double-strand-specific 3'-5' exonuclease activity, which are provided by MRE11, to initiate end resection, which is required for single-strand invasion and recombination. Within the MRN complex, NBS1 acts as a protein-protein adapter, which specifically recognizes and binds phosphorylated proteins, promoting their recruitment to DNA damage sites. Recruits MRE11 and RAD50 components of the MRN complex to DSBs in response to DNA damage. This Arabidopsis thaliana (Mouse-ear cress) protein is Nibrin homolog.